An 86-amino-acid chain; its full sequence is Sec-independent protein translocase protein TatA (86 aa).

A helical membrane pass occupies residues 3-23 (IFGVGLPEVTVILILALLIFG). The tract at residues 56–86 (MNEEDESPKSIESNQTNEINQEKIDSENSKK) is disordered. A compositionally biased stretch (polar residues) spans 65–74 (SIESNQTNEI). Over residues 75–86 (NQEKIDSENSKK) the composition is skewed to basic and acidic residues.

Belongs to the TatA/E family. Forms a complex with TatC.

Its subcellular location is the cell inner membrane. Its function is as follows. Part of the twin-arginine translocation (Tat) system that transports large folded proteins containing a characteristic twin-arginine motif in their signal peptide across membranes. TatA could form the protein-conducting channel of the Tat system. The polypeptide is Sec-independent protein translocase protein TatA (Prochlorococcus marinus (strain MIT 9215)).